The primary structure comprises 492 residues: Aspartyl/glutamyl-tRNA(Asn/Gln) amidotransferase subunit B (492 aa).

This sequence belongs to the GatB/GatE family. GatB subfamily. Heterotrimer of A, B and C subunits.

It catalyses the reaction L-glutamyl-tRNA(Gln) + L-glutamine + ATP + H2O = L-glutaminyl-tRNA(Gln) + L-glutamate + ADP + phosphate + H(+). The enzyme catalyses L-aspartyl-tRNA(Asn) + L-glutamine + ATP + H2O = L-asparaginyl-tRNA(Asn) + L-glutamate + ADP + phosphate + 2 H(+). In terms of biological role, allows the formation of correctly charged Asn-tRNA(Asn) or Gln-tRNA(Gln) through the transamidation of misacylated Asp-tRNA(Asn) or Glu-tRNA(Gln) in organisms which lack either or both of asparaginyl-tRNA or glutaminyl-tRNA synthetases. The reaction takes place in the presence of glutamine and ATP through an activated phospho-Asp-tRNA(Asn) or phospho-Glu-tRNA(Gln). In Dehalococcoides mccartyi (strain CBDB1), this protein is Aspartyl/glutamyl-tRNA(Asn/Gln) amidotransferase subunit B.